Here is an 829-residue protein sequence, read N- to C-terminus: MEGGDSTISVAGRGASGSAVVAATVQAILQDDCYSEFLNEDFDVKTYTSQSIHQAVIAEQLAKLAQGISQLDKELHLQVVARHEDLLAQATGIESLEGVLQMMQTRIGALQGAVDRMKSKIVEPYNKIVARTAQLARLQVACDLLRRIIRILYLSKRLQGQLQGGSREITKAAQSLNELDYLSQGIDLSGIEVIENDLLFIARARLEVENQAKRLLEQGVETQNPTQVGTALQVFHNLGTLKETVTSVVDGYCAALEDSINNALDVKVLTQPSQSAVRGGPGRAAMPTPGSTAGFRASLWTNMEKLMDHICAACGQVQHLQKVLTKKRDPVSHICFIEEIIKDGQPEILYMFWNAVTLALSSHFHSATNSSMFLKQAFEGEYPKLLRLYNDLWKRLQQSSQNTQGTFSPSGTPDLCVDLPHMEDDTQDMFRLKRPDYDPEKALKDSLQPYEAAYLSKSLSRLFDPINLVFPPGGRNPPSSDELDGITKTITSELNVAAVDANLTLAVSKNVAKTIQLYAVKSEQLLSTQGDASQVIGPLTEGQKRNVGVVNSLFKLHQSVTKVVASQSSFSATAEQTIMSALKTIHDLMGNAIQPLLTSVADAIEAIIITMHQEDFSGASSSSGKPDVPCSLYMKELQGFIARVMNDYFKHFECLDFVFDNTEAIAQRAIELFIRNASLIRPLGEGGKLRLAADFAQMELAVGPLCRRVSDLGKSYRMLRSFRPLLFQTSEHVADSPAVGDIIPFSIIIQFLFTRAPAELKSPFQRAEWSHARFSQWLDDHPSEKDRLLLLRGALEAYVQSVRSRDGKEFAPVYPIMVQLLQKAMSALQ.

At serine 166 the chain carries Phosphoserine.

The protein belongs to the COG5 family. In terms of assembly, component of the conserved oligomeric Golgi complex which is composed of eight different subunits and is required for normal Golgi morphology and localization.

The protein resides in the cytoplasm. It localises to the cytosol. It is found in the golgi apparatus membrane. Functionally, required for normal Golgi function. This Mus musculus (Mouse) protein is Conserved oligomeric Golgi complex subunit 5 (Cog5).